We begin with the raw amino-acid sequence, 224 residues long: Ribonuclease HII (224 aa).

The RNase H type-2 domain occupies 1–219 (MMIAGIDEAG…VENIREELKK (219 aa)). A divalent metal cation is bound by residues Asp-7, Glu-8, and Asp-105.

This sequence belongs to the RNase HII family. Mn(2+) serves as cofactor. Requires Mg(2+) as cofactor.

The protein localises to the cytoplasm. The catalysed reaction is Endonucleolytic cleavage to 5'-phosphomonoester.. In terms of biological role, endonuclease that specifically degrades the RNA of RNA-DNA hybrids. The polypeptide is Ribonuclease HII (Methanosarcina barkeri (strain Fusaro / DSM 804)).